Reading from the N-terminus, the 332-residue chain is DNA-directed RNA polymerase subunit alpha (332 aa).

The alpha N-terminal domain (alpha-NTD) stretch occupies residues 1–232; that stretch reads MKGYLKDFLK…DQLSVFVDLE (232 aa). The interval 247-332 is alpha C-terminal domain (alpha-CTD); that stretch reads IDPVLLRPID…SLGDRARIAG (86 aa).

This sequence belongs to the RNA polymerase alpha chain family. Homodimer. The RNAP catalytic core consists of 2 alpha, 1 beta, 1 beta' and 1 omega subunit. When a sigma factor is associated with the core the holoenzyme is formed, which can initiate transcription.

The enzyme catalyses RNA(n) + a ribonucleoside 5'-triphosphate = RNA(n+1) + diphosphate. Functionally, DNA-dependent RNA polymerase catalyzes the transcription of DNA into RNA using the four ribonucleoside triphosphates as substrates. This is DNA-directed RNA polymerase subunit alpha from Halorhodospira halophila (strain DSM 244 / SL1) (Ectothiorhodospira halophila (strain DSM 244 / SL1)).